Consider the following 145-residue polypeptide: Acidic phospholipase A2 (145 aa).

The signal sequence occupies residues 1–21 (MYPAHLLVLLAVCVSLLGAAS). The propeptide occupies 22–27 (IPPLPL). Disulfide bonds link C38-C98, C54-C144, C56-C72, C71-C125, C78-C118, C87-C111, and C105-C116. Ca(2+) is bound by residues Y55 and G57. Residue H75 is part of the active site. D76 contributes to the Ca(2+) binding site. D119 is a catalytic residue.

The protein belongs to the phospholipase A2 family. Group I subfamily. D49 sub-subfamily. Ca(2+) is required as a cofactor. As to expression, expressed by the venom gland.

It is found in the secreted. It catalyses the reaction a 1,2-diacyl-sn-glycero-3-phosphocholine + H2O = a 1-acyl-sn-glycero-3-phosphocholine + a fatty acid + H(+). Its function is as follows. PLA2 catalyzes the calcium-dependent hydrolysis of the 2-acyl groups in 3-sn-phosphoglycerides. The sequence is that of Acidic phospholipase A2 from Notechis scutatus scutatus (Mainland tiger snake).